Reading from the N-terminus, the 161-residue chain is Putative allophycocyanin subunit alpha 2 (161 aa).

N71 is subject to N4-methylasparagine. C81 is a binding site for (2R,3E)-phycocyanobilin.

Belongs to the phycobiliprotein family. As to quaternary structure, heterohexamer of two alpha chains, one alpha-B chain and three beta chains. Contains one covalently linked phycocyanobilin chromophore. The chromophore is added by phycocyanobilin lyase CpcS 1.

Its subcellular location is the cellular thylakoid membrane. In terms of biological role, light-harvesting photosynthetic bile pigment-protein from the phycobiliprotein complex. Allophycocyanin has a maximum absorption at approximately 650 to 653 nanometers. The protein is Putative allophycocyanin subunit alpha 2 (apcA2) of Nostoc sp. (strain PCC 7120 / SAG 25.82 / UTEX 2576).